The following is a 336-amino-acid chain: UPF0284 protein Pcal_1534 (336 aa).

Belongs to the UPF0284 family.

In Pyrobaculum calidifontis (strain DSM 21063 / JCM 11548 / VA1), this protein is UPF0284 protein Pcal_1534.